A 238-amino-acid chain; its full sequence is D/L-lactic acid transporter (238 aa).

The next 2 helical transmembrane spans lie at Val2–Val22 and Ile39–Val59. The NPA 1 motif lies at Asn62–Ala64. The next 3 helical transmembrane spans lie at Phe80–Ile100, Phe135–Ile155, and Pro158–Gly178. The NPA 2 signature appears at Asn185–Ala187. The chain crosses the membrane as a helical span at residues Tyr211 to Met231.

The protein belongs to the MIP/aquaporin (TC 1.A.8) family.

The protein resides in the cell membrane. Transporter that facilitates the transmembrane diffusion of D/L-lactic acid. Is involved in the cellular racemization of lactate and lactate metabolism. The transported molecule is indeed lactic acid and not the lactate anion, in agreement with the assumption that, with very few exceptions, MIPs (major intrinsic proteins) only facilitate the transport of uncharged solutes. Also facilitates urea and H(2)O(2) diffusion across membranes, but is not permeable to water, glycerol and dihydroxyacetone. This is D/L-lactic acid transporter from Lactiplantibacillus plantarum (strain ATCC BAA-793 / NCIMB 8826 / WCFS1) (Lactobacillus plantarum).